A 336-amino-acid polypeptide reads, in one-letter code: tRNA N6-adenosine threonylcarbamoyltransferase (336 aa).

Fe cation-binding residues include His111 and His115. Substrate-binding positions include 134-138 (LVSGG), Asp167, Gly180, and Asn271. Asp299 is a binding site for Fe cation.

It belongs to the KAE1 / TsaD family. Requires Fe(2+) as cofactor.

The protein localises to the cytoplasm. It carries out the reaction L-threonylcarbamoyladenylate + adenosine(37) in tRNA = N(6)-L-threonylcarbamoyladenosine(37) in tRNA + AMP + H(+). Its function is as follows. Required for the formation of a threonylcarbamoyl group on adenosine at position 37 (t(6)A37) in tRNAs that read codons beginning with adenine. Is involved in the transfer of the threonylcarbamoyl moiety of threonylcarbamoyl-AMP (TC-AMP) to the N6 group of A37, together with TsaE and TsaB. TsaD likely plays a direct catalytic role in this reaction. This chain is tRNA N6-adenosine threonylcarbamoyltransferase, found in Thioalkalivibrio sulfidiphilus (strain HL-EbGR7).